The chain runs to 426 residues: Eukaryotic translation initiation factor 3 subunit M (426 aa).

One can recognise a PCI domain in the interval 179–350; sequence DDEDSYRYLI…KVFLVHRTTY (172 aa). Residues 385 to 401 are compositionally biased toward basic and acidic residues; the sequence is DVEGQREREQQELERKL. The tract at residues 385 to 426 is disordered; the sequence is DVEGQREREQQELERKLAGAGMGGGPGGDRRRQQKPRTDEDD.

It belongs to the eIF-3 subunit M family. In terms of assembly, component of the eukaryotic translation initiation factor 3 (eIF-3) complex.

The protein resides in the cytoplasm. In terms of biological role, component of the eukaryotic translation initiation factor 3 (eIF-3) complex, which is involved in protein synthesis of a specialized repertoire of mRNAs and, together with other initiation factors, stimulates binding of mRNA and methionyl-tRNAi to the 40S ribosome. The eIF-3 complex specifically targets and initiates translation of a subset of mRNAs involved in cell proliferation. This chain is Eukaryotic translation initiation factor 3 subunit M, found in Chaetomium globosum (strain ATCC 6205 / CBS 148.51 / DSM 1962 / NBRC 6347 / NRRL 1970) (Soil fungus).